We begin with the raw amino-acid sequence, 442 residues long: D-serine dehydratase (442 aa).

Position 118 is an N6-(pyridoxal phosphate)lysine (Lys118).

It belongs to the serine/threonine dehydratase family. DsdA subfamily. As to quaternary structure, monomer. Pyridoxal 5'-phosphate is required as a cofactor.

The enzyme catalyses D-serine = pyruvate + NH4(+). The sequence is that of D-serine dehydratase from Escherichia coli O139:H28 (strain E24377A / ETEC).